The sequence spans 649 residues: Protein phosphatase Slingshot homolog 3 (649 aa).

Over residues 1-20 (MALVTVSRSPPASGHSTPVG) the composition is skewed to polar residues. Positions 1-32 (MALVTVSRSPPASGHSTPVGPTQDRVVRRRGR) are disordered. Alanine 2 carries the N-acetylalanine modification. Serine 9 and serine 38 each carry phosphoserine. Residues 49-90 (LQDGGDSNVASEADSEPMEEPSGEEQPTEDQTDKGQGLQSPW) are disordered. The segment covering 61 to 78 (ADSEPMEEPSGEEQPTED) has biased composition (acidic residues). Phosphoserine is present on serine 88. One can recognise a DEK-C domain in the interval 266 to 321 (EKMEQAILAELWQVLDTSDLDSVTSKEIRQALELRLGCPLQQYRDFIDNQMLLLMA). Positions 325–466 (RASRIFPHLY…LRTYQGILTA (142 aa)) constitute a Tyrosine-protein phosphatase domain. Cysteine 410 serves as the catalytic Phosphocysteine intermediate. Low complexity-rich tracts occupy residues 541-551 (LEPSESESTPE) and 608-627 (TRAFQEQGQGQEQSEPGMSS). Disordered stretches follow at residues 541–586 (LEPS…KGPW) and 608–649 (TRAF…EDKA). The span at 639-649 (SVDDSREEDKA) shows a compositional bias: basic and acidic residues.

Belongs to the protein-tyrosine phosphatase family. Does not bind to, or colocalize with, filamentous actin. Expressed in brain, small intestine and testis. Also expressed at lower levels in heart, kidney, liver, spleen and thymus.

Its subcellular location is the cytoplasm. It localises to the cytoskeleton. The protein resides in the nucleus. The enzyme catalyses O-phospho-L-tyrosyl-[protein] + H2O = L-tyrosyl-[protein] + phosphate. It carries out the reaction O-phospho-L-seryl-[protein] + H2O = L-seryl-[protein] + phosphate. The catalysed reaction is O-phospho-L-threonyl-[protein] + H2O = L-threonyl-[protein] + phosphate. Protein phosphatase which may play a role in the regulation of actin filament dynamics. Can dephosphorylate and activate the actin binding/depolymerizing factor cofilin, which subsequently binds to actin filaments and stimulates their disassembly. This chain is Protein phosphatase Slingshot homolog 3 (Ssh3), found in Mus musculus (Mouse).